The following is a 301-amino-acid chain: Sulfate adenylyltransferase subunit 2 2 (301 aa).

This sequence belongs to the PAPS reductase family. CysD subfamily. In terms of assembly, heterodimer composed of CysD, the smaller subunit, and CysN.

The catalysed reaction is sulfate + ATP + H(+) = adenosine 5'-phosphosulfate + diphosphate. It functions in the pathway sulfur metabolism; hydrogen sulfide biosynthesis; sulfite from sulfate: step 1/3. With CysN forms the ATP sulfurylase (ATPS) that catalyzes the adenylation of sulfate producing adenosine 5'-phosphosulfate (APS) and diphosphate, the first enzymatic step in sulfur assimilation pathway. APS synthesis involves the formation of a high-energy phosphoric-sulfuric acid anhydride bond driven by GTP hydrolysis by CysN coupled to ATP hydrolysis by CysD. The polypeptide is Sulfate adenylyltransferase subunit 2 2 (Shewanella sediminis (strain HAW-EB3)).